Here is a 188-residue protein sequence, read N- to C-terminus: Grand meiotic recombination cluster protein 2 (188 aa).

Polar residues-rich tracts occupy residues 1–13 and 21–31; these read MSDTTEVPRQSSE and ERTNSLKSPDV. The segment at 1–31 is disordered; the sequence is MSDTTEVPRQSSENDQDNNLERTNSLKSPDV.

In terms of biological role, probable transcriptional activator involved in meiotic prophase and synaptonemal complex (SC) assembly. The polypeptide is Grand meiotic recombination cluster protein 2 (GMC2) (Saccharomyces cerevisiae (strain ATCC 204508 / S288c) (Baker's yeast)).